A 469-amino-acid polypeptide reads, in one-letter code: Transcription factor SOX-10 (469 aa).

Disordered regions lie at residues 1–70 (MAEE…DDDK), 163–203 (LRMQ…QGGA), 215–278 (LDHR…DFGN), 357–378 (AQVK…QPST), and 436–469 (RPLY…LSRP). The segment covering 23-32 (LSPGSAPSLG) has biased composition (low complexity). Ser-24 is subject to Phosphoserine. Over residues 33 to 44 (PDGGGGGGGGSG) the composition is skewed to gly residues. The interval 65–105 (EADDDKFPVCIREAVSQVLSGYDWTLVPMPVRVNGASKSKP) is dimerization (DIM). Residues 107–175 (VKRPMNAFMV…QHKKDHPDYK (69 aa)) constitute a DNA-binding region (HMG box). Composition is skewed to basic and acidic residues over residues 163–176 (LRMQ…DYKY) and 257–274 (ADPK…KPHI). Residues 231 to 313 (PEHPSGQSHG…LPPNGHPGHV (83 aa)) form a transactivation domain (TAM) region. The segment at 356–469 (KAQVKTETAG…QPVYTTLSRP (114 aa)) is transactivation domain (TAC). The segment covering 443-469 (SDPSPSGPQSHSPTHWEQPVYTTLSRP) has biased composition (polar residues).

As to quaternary structure, monomer. Interacts with ARMCX3 at the mitochondrial outer membrane surface. Interacts with PAX3.

It is found in the cytoplasm. The protein localises to the nucleus. The protein resides in the mitochondrion outer membrane. Transcription factor that plays a central role in developing and mature glia. Specifically activates expression of myelin genes, during oligodendrocyte (OL) maturation, such as DUSP15 and MYRF, thereby playing a central role in oligodendrocyte maturation and CNS myelination. Once induced, MYRF cooperates with SOX10 to implement the myelination program. Transcriptional activator of MITF, acting synergistically with PAX3. Transcriptional activator of MBP, via binding to the gene promoter. This Sus scrofa (Pig) protein is Transcription factor SOX-10 (SOX10).